A 351-amino-acid chain; its full sequence is Flap endonuclease 1 (351 aa).

Residues 1-98 (MDLAELVEEI…QELERRKKVK (98 aa)) form an N-domain region. 7 residues coordinate Mg(2+): Asp27, Asp80, Glu154, Glu156, Asp175, Asp177, and Asp238. The interval 118–260 (ELKKYAQMSI…TAYRIIKKYG (143 aa)) is I-domain. Residues 343-351 (RQTGLDQWF) form an interaction with PCNA region.

This sequence belongs to the XPG/RAD2 endonuclease family. FEN1 subfamily. In terms of assembly, interacts with PCNA. PCNA stimulates the nuclease activity without altering cleavage specificity. It depends on Mg(2+) as a cofactor.

In terms of biological role, structure-specific nuclease with 5'-flap endonuclease and 5'-3' exonuclease activities involved in DNA replication and repair. During DNA replication, cleaves the 5'-overhanging flap structure that is generated by displacement synthesis when DNA polymerase encounters the 5'-end of a downstream Okazaki fragment. Binds the unpaired 3'-DNA end and kinks the DNA to facilitate 5' cleavage specificity. Cleaves one nucleotide into the double-stranded DNA from the junction in flap DNA, leaving a nick for ligation. Also involved in the base excision repair (BER) pathway. Acts as a genome stabilization factor that prevents flaps from equilibrating into structures that lead to duplications and deletions. Also possesses 5'-3' exonuclease activity on nicked or gapped double-stranded DNA. The sequence is that of Flap endonuclease 1 from Sulfurisphaera tokodaii (strain DSM 16993 / JCM 10545 / NBRC 100140 / 7) (Sulfolobus tokodaii).